The sequence spans 454 residues: T-box protein VegT (454 aa).

The segment at residues 57–230 is a DNA-binding region (T-box); it reads LWSQFHQEGT…HNPFAKGFRE (174 aa). Basic and acidic residues predominate over residues 229-241; the sequence is REQERSHKRDDVL. 2 disordered regions span residues 229-274 and 295-358; these read REQE…ATRV and ANQG…VPDS. The segment covering 308-325 has biased composition (polar residues); it reads GVNQEQQVPTSSLNFYNK.

As to quaternary structure, forms a repression complex on the promoters of the nodal/nr1 and siamois genes with the maternal factors tcf7l1/tcf3 and pouf5.1/oct-25. Interacts (via C-terminus) with tcf7l1/tcf3 (via N-terminus). Also interacts with the other POU-domain transcription factors pou5f1.2/oct-91 and pou5f1.3/oct-60.

Its subcellular location is the nucleus. Transcription factor required for both mesoderm and endoderm formation in the embryo; signaling determinants and concentration levels may determine which germ layer is formed. Acts together with beta-catenin to activate genes that are responsible for mesoderm induction including wnt-8, eomes t/bra, siamois, mix1 and sox17. Directly binds to promoter DNA. Patterns the mesoderm along the dorsoventral and posterior axis. Activates siamois gene transcription when alone or in combination with beta-catenin, but inhibits siamois transcription in combination with pou5f1.1/oct-25. The polypeptide is T-box protein VegT (Xenopus borealis (Kenyan clawed frog)).